A 285-amino-acid chain; its full sequence is Polyamine aminopropyltransferase (285 aa).

The PABS domain maps to 2–237; the sequence is EFWFSELHSP…GYWLFGFASK (236 aa). Glutamine 31 contributes to the S-methyl-5'-thioadenosine binding site. Aspartate 86 lines the spermidine pocket. Residues glutamate 106 and 137-138 each bind S-methyl-5'-thioadenosine; that span reads DA. Aspartate 155 functions as the Proton acceptor in the catalytic mechanism.

It belongs to the spermidine/spermine synthase family. Homodimer or homotetramer.

Its subcellular location is the cytoplasm. It carries out the reaction S-adenosyl 3-(methylsulfanyl)propylamine + putrescine = S-methyl-5'-thioadenosine + spermidine + H(+). Its pathway is amine and polyamine biosynthesis; spermidine biosynthesis; spermidine from putrescine: step 1/1. Its function is as follows. Catalyzes the irreversible transfer of a propylamine group from the amino donor S-adenosylmethioninamine (decarboxy-AdoMet) to putrescine (1,4-diaminobutane) to yield spermidine. The sequence is that of Polyamine aminopropyltransferase from Lachnospira eligens (strain ATCC 27750 / DSM 3376 / VPI C15-48 / C15-B4) (Eubacterium eligens).